The following is a 316-amino-acid chain: Petrobactin import system permease protein YclN (316 aa).

A run of 8 helical transmembrane segments spans residues 5-25 (YLFI…VEDL), 49-69 (LISI…MQQI), 94-114 (LLLF…VFAL), 133-153 (IFIP…ATFI), 181-201 (LLYL…KFTL), 224-244 (LIIV…LPFL), 268-288 (VLLG…IIFP), and 290-310 (EISI…FMLL).

The protein belongs to the binding-protein-dependent transport system permease family. FecCD subfamily. In terms of assembly, the complex is composed of two ATP-binding proteins (YclP), two transmembrane proteins (YclN and YclO) and a solute-binding protein (YclQ).

It is found in the cell membrane. In terms of biological role, part of the ABC transporter complex YclNOPQ involved in uptake of ferric-petrobactin. Petrobactin is a photoreactive 3,4-catecholate siderophore produced by many members of the B.cereus group, including B.anthracis. Probably responsible for the translocation of the substrate across the membrane. This Bacillus subtilis (strain 168) protein is Petrobactin import system permease protein YclN (yclN).